The primary structure comprises 360 residues: Phospho-N-acetylmuramoyl-pentapeptide-transferase (360 aa).

Helical transmembrane passes span 25–45 (RGILGVLTALSLALWLGPWMI), 73–93 (TMGGALILSAIAISTLLWADL), 97–117 (YVWVVLIVTLAFGAIGWVDDY), 134–154 (YFWQSVFGLAAAIFLYKTAPT), 168–188 (LAIPLGAGFIVLTYFVIVGSS), 199–219 (GLAIMPTVMVGGALGIFCYLS), 236–256 (AGELIVFCGALIGAGLGFLWF), 263–283 (VFMGDVGALALGAALGTIAVI), 288–308 (VVLFIMGGVFVMETLSVVIQV), and 338–358 (VIVRFWIITVILVLIGLATLK).

It belongs to the glycosyltransferase 4 family. MraY subfamily. The cofactor is Mg(2+).

The protein resides in the cell inner membrane. It carries out the reaction UDP-N-acetyl-alpha-D-muramoyl-L-alanyl-gamma-D-glutamyl-meso-2,6-diaminopimeloyl-D-alanyl-D-alanine + di-trans,octa-cis-undecaprenyl phosphate = di-trans,octa-cis-undecaprenyl diphospho-N-acetyl-alpha-D-muramoyl-L-alanyl-D-glutamyl-meso-2,6-diaminopimeloyl-D-alanyl-D-alanine + UMP. Its pathway is cell wall biogenesis; peptidoglycan biosynthesis. Functionally, catalyzes the initial step of the lipid cycle reactions in the biosynthesis of the cell wall peptidoglycan: transfers peptidoglycan precursor phospho-MurNAc-pentapeptide from UDP-MurNAc-pentapeptide onto the lipid carrier undecaprenyl phosphate, yielding undecaprenyl-pyrophosphoryl-MurNAc-pentapeptide, known as lipid I. The chain is Phospho-N-acetylmuramoyl-pentapeptide-transferase from Pseudomonas entomophila (strain L48).